Here is a 124-residue protein sequence, read N- to C-terminus: Fluoride-specific ion channel FluC 2 (124 aa).

4 helical membrane passes run 1–21 (MSDILFVSIGAILGANIRFQI), 34–54 (FLILIINTFASFGLGLFLSLV), 66–86 (LILFFSIGFFGSLSTFSSFVY), and 103–123 (LFIISVSIGIIAFAFGLFLGT). Glycine 76 and serine 79 together coordinate Na(+).

It belongs to the fluoride channel Fluc/FEX (TC 1.A.43) family.

Its subcellular location is the cell inner membrane. It catalyses the reaction fluoride(in) = fluoride(out). With respect to regulation, na(+) is not transported, but it plays an essential structural role and its presence is essential for fluoride channel function. Its function is as follows. Fluoride-specific ion channel. Important for reducing fluoride concentration in the cell, thus reducing its toxicity. This chain is Fluoride-specific ion channel FluC 2, found in Prochlorococcus marinus (strain NATL2A).